The sequence spans 148 residues: Small ribosomal subunit protein bS16 (148 aa).

Residues 106–148 (QAAARAAAGAEDRPATTPKKAKKSGSAEEAEAAPATDAPAAGQ) are disordered. Over residues 137–148 (AAPATDAPAAGQ) the composition is skewed to low complexity.

Belongs to the bacterial ribosomal protein bS16 family.

In Frankia casuarinae (strain DSM 45818 / CECT 9043 / HFP020203 / CcI3), this protein is Small ribosomal subunit protein bS16.